The primary structure comprises 384 residues: MAP kinase-activated protein kinase 3 (384 aa).

Position 1 is an N-acetylmethionine (Met-1). The interval 1 to 33 is disordered; the sequence is MDGETAGEKGSLVPPPGALGGSALGGAPAPGVR. Residues 46–306 enclose the Protein kinase domain; sequence QLSKQVLGLG…IMQFMNHPWI (261 aa). Residues 52–60 and Lys-75 each bind ATP; that span reads LGLGVNGKV. Asp-168 serves as the catalytic Proton acceptor. Thr-203 carries the phosphothreonine; by MAPK14 modification. Ser-253 bears the Phosphoserine; by MAPK14 mark. Ser-309 bears the Phosphoserine; by autocatalysis mark. The autoinhibitory helix stretch occupies residues 309–345; sequence SMVVPQTPLYTARVLQEDKDHWDDVKEEMTSALATMR. Thr-315 bears the Phosphothreonine; by MAPK14 mark. A Nuclear export signal (NES) motif is present at residues 337-346; sequence MTSALATMRV. The p38 MAPK-binding site stretch occupies residues 347 to 371; that stretch reads DYDQVKIKDLKTSNNRLLNKRRKKQ. Short sequence motifs (bipartite nuclear localization signal) lie at residues 352-355 and 366-370; these read KIKD and KRRKK. The tract at residues 359-384 is disordered; the sequence is SNNRLLNKRRKKQAGSSSASQGCNNQ. A compositionally biased stretch (polar residues) spans 372 to 384; it reads AGSSSASQGCNNQ.

The protein belongs to the protein kinase superfamily. CAMK Ser/Thr protein kinase family. Heterodimer with p38-alpha/MAPK14. The heterodimer with p38-alpha/MAPK14 forms a stable complex: molecules are positioned 'face to face' so that the ATP-binding sites of both kinases are at the heterodimer interface. Interacts with TCF3 and with polycomb proteins, such as PCH2 and BMI1/PCGF4. Post-translationally, phosphorylated and activated by MAPK1/ERK2 and MAPK3/ERK1. Phosphorylated and activated by MAP kinase p38-alpha/MAPK14 at Thr-201, Ser-251 and Thr-313. Isoform 3 is degraded following phosphorylation at Thr-203. As to expression, ubiquitously expressed (at protein level). Isoform 3 is expressed in skeletal muscles and heart.

Its subcellular location is the nucleus. The protein resides in the cytoplasm. The enzyme catalyses L-seryl-[protein] + ATP = O-phospho-L-seryl-[protein] + ADP + H(+). It catalyses the reaction L-threonyl-[protein] + ATP = O-phospho-L-threonyl-[protein] + ADP + H(+). Its activity is regulated as follows. Activated following phosphorylation by p38-alpha/MAPK14 following various stresses. Inhibited by ligand 5B (2'-[2-(1,3-benzodioxol-5-yl)pyrimidin-4-yl]-5',6'-dihydrospiro[piperidine-4,7'-pyrrolo[3,2-c]pyridin]- 4'(1'h)-one) and ligand P4O (2-[2-(2-fluorophenyl)pyridin-4-yl]-1,5,6,7-tetrahydro- 4h-pyrrolo[3,2-c]pyridin-4-one), 2 ATP-competitive inhibitors. In terms of biological role, stress-activated serine/threonine-protein kinase involved in cytokines production, endocytosis, cell migration, chromatin remodeling and transcriptional regulation. Following stress, it is phosphorylated and activated by MAP kinase p38-alpha/MAPK14, leading to phosphorylation of substrates. Phosphorylates serine in the peptide sequence, Hyd-X-R-X(2)-S, where Hyd is a large hydrophobic residue. MAPKAPK2 and MAPKAPK3, share the same function and substrate specificity, but MAPKAPK3 kinase activity and level in protein expression are lower compared to MAPKAPK2. Phosphorylates HSP27/HSPB1, KRT18, KRT20, RCSD1, RPS6KA3, TAB3 and TTP/ZFP36. Mediates phosphorylation of HSP27/HSPB1 in response to stress, leading to dissociate HSP27/HSPB1 from large small heat-shock protein (sHsps) oligomers and impair their chaperone activities and ability to protect against oxidative stress effectively. Involved in inflammatory response by regulating tumor necrosis factor (TNF) and IL6 production post-transcriptionally: acts by phosphorylating AU-rich elements (AREs)-binding proteins, such as TTP/ZFP36, leading to regulate the stability and translation of TNF and IL6 mRNAs. Phosphorylation of TTP/ZFP36, a major post-transcriptional regulator of TNF, promotes its binding to 14-3-3 proteins and reduces its ARE mRNA affinity leading to inhibition of dependent degradation of ARE-containing transcript. Involved in toll-like receptor signaling pathway (TLR) in dendritic cells: required for acute TLR-induced macropinocytosis by phosphorylating and activating RPS6KA3. Also acts as a modulator of Polycomb-mediated repression. The protein is MAP kinase-activated protein kinase 3 (Mapkapk3) of Mus musculus (Mouse).